Here is a 349-residue protein sequence, read N- to C-terminus: Secondary metabolism regulator LAE1 (349 aa).

Residues 1–46 (MSSRNAPSGCVAPSPATAAPPSPTNLRLTVGQSGSESANEPGGEPE) are disordered. The span at 25 to 38 (NLRLTVGQSGSESA) shows a compositional bias: polar residues.

It belongs to the methyltransferase superfamily. LaeA methyltransferase family. In terms of assembly, component of the heterotrimeric velvet complex composed of LAE1, VEL1 and VEL2; VEL1 acting as a bridging protein between LAE1 and VEL2.

It is found in the nucleus. It carries out the reaction L-methionyl-[protein] + S-adenosyl-L-methionine = S-methyl-L-methionyl-[protein] + S-adenosyl-L-homocysteine. Its function is as follows. Methyltransferase that performs automethylation. No other methyl-accepting substrate has been identified yet. Component of the velvet transcription factor complex that acts as a global regulator for secondary metabolite gene expression. Controls the expression of the gamma-pentyl-pyrone gene clusters. Required for the expression of cellulase. Regulates asexual sporulation (conidiation) by environmental stimuli such as light and/or mechanical injury. Required for oxidative stress tolerance. Also plays a role in defense and parasitism on other fungi. The protein is Secondary metabolism regulator LAE1 of Hypocrea atroviridis (strain ATCC 20476 / IMI 206040) (Trichoderma atroviride).